We begin with the raw amino-acid sequence, 464 residues long: ATP synthase subunit beta (464 aa).

150–157 (GGAGVGKT) lines the ATP pocket.

Belongs to the ATPase alpha/beta chains family. As to quaternary structure, F-type ATPases have 2 components, CF(1) - the catalytic core - and CF(0) - the membrane proton channel. CF(1) has five subunits: alpha(3), beta(3), gamma(1), delta(1), epsilon(1). CF(0) has three main subunits: a(1), b(2) and c(9-12). The alpha and beta chains form an alternating ring which encloses part of the gamma chain. CF(1) is attached to CF(0) by a central stalk formed by the gamma and epsilon chains, while a peripheral stalk is formed by the delta and b chains.

The protein localises to the cell membrane. It catalyses the reaction ATP + H2O + 4 H(+)(in) = ADP + phosphate + 5 H(+)(out). Functionally, produces ATP from ADP in the presence of a proton gradient across the membrane. The catalytic sites are hosted primarily by the beta subunits. This Dehalococcoides mccartyi (strain ATCC BAA-2100 / JCM 16839 / KCTC 5957 / BAV1) protein is ATP synthase subunit beta.